Consider the following 397-residue polypeptide: MSKTIAINAGSSSLKWQLYEMPEEKVVAKGIIERIGLKDSISTVKFDDKKDEQILDIVDHTQAVKILLEDLTKHGIIKDFNEITGVGHRVVAGGEYFKESALVDDKVVEQVEELSALAPLHNPAAAAGIRAFREILPDITSVCVFDTAFHTTMQPHTYLYPIPQKYYTDYKVRKYGAHGTSHQYVAQEAAKQLGRPLEELKLITAHVGNGVSITANYHGQSIDTSMGFTPLAGPMMGTRSGDIDPAIIPYLVANDSELEDAAAVVNMLNKQSGLLGVSGTSSDMRDIEAGLQSKDPNAVLAYNVFIDRIKKFIGQYLAVLNGADAIIFTAGMGENAPLMRQDVIAGLSWFGIELDPEKNVFGYFGDITKPDSKVKVLVIPTDEELMIARDVERLKAK.

Asparagine 8 provides a ligand contact to Mg(2+). ATP is bound at residue lysine 15. Arginine 89 serves as a coordination point for substrate. Aspartate 146 (proton donor/acceptor) is an active-site residue. Residues 206 to 210, 283 to 285, and 331 to 335 each bind ATP; these read HVGNG, DMR, and GMGEN. Glutamate 383 lines the Mg(2+) pocket.

The protein belongs to the acetokinase family. In terms of assembly, homodimer. The cofactor is Mg(2+). Requires Mn(2+) as cofactor.

Its subcellular location is the cytoplasm. The catalysed reaction is acetate + ATP = acetyl phosphate + ADP. The protein operates within metabolic intermediate biosynthesis; acetyl-CoA biosynthesis; acetyl-CoA from acetate: step 1/2. Catalyzes the formation of acetyl phosphate from acetate and ATP. Can also catalyze the reverse reaction. This is Acetate kinase from Streptococcus agalactiae serotype III (strain NEM316).